A 101-amino-acid polypeptide reads, in one-letter code: uncharacterized protein (101 aa).

The signal sequence occupies residues 1–27 (MQLTGSIYPWFTAYALLKSTLMELINS). Helical transmembrane passes span 42–64 (LVPYWLSIRLSLLYFKLTEAISF) and 79–98 (TFVFGYIVNCFFIIHLNTFL).

The protein localises to the cytoplasm. Its subcellular location is the nucleus membrane. This is an uncharacterized protein from Schizosaccharomyces pombe (strain 972 / ATCC 24843) (Fission yeast).